Here is a 310-residue protein sequence, read N- to C-terminus: Tryptophan 2,3-dioxygenase (310 aa).

Residues 1–36 (MQPPGEDAPAGCPFSGARAAHSAPAAPAAHEASHVP) form a disordered region. Residues 15 to 36 (SGARAAHSAPAAPAAHEASHVP) are compositionally biased toward low complexity. Substrate contacts are provided by residues 79–83 (FIIQH), Tyr141, and Arg145. Heme is bound at residue His268. Thr282 provides a ligand contact to substrate.

It belongs to the tryptophan 2,3-dioxygenase family. Homotetramer. The cofactor is heme.

It carries out the reaction L-tryptophan + O2 = N-formyl-L-kynurenine. Its pathway is amino-acid degradation; L-tryptophan degradation via kynurenine pathway; L-kynurenine from L-tryptophan: step 1/2. In terms of biological role, heme-dependent dioxygenase that catalyzes the oxidative cleavage of the L-tryptophan (L-Trp) pyrrole ring and converts L-tryptophan to N-formyl-L-kynurenine. Catalyzes the oxidative cleavage of the indole moiety. This is Tryptophan 2,3-dioxygenase from Burkholderia lata (strain ATCC 17760 / DSM 23089 / LMG 22485 / NCIMB 9086 / R18194 / 383).